Consider the following 466-residue polypeptide: GTPase Der (466 aa).

EngA-type G domains are found at residues 3–166 (PVIA…PEIP) and 177–350 (IKIA…QSAT). GTP is bound by residues 9-16 (GRPNVGKS), 56-60 (DTGGI), 118-121 (NKID), 183-190 (GRPNVGKS), 230-234 (DTAGV), and 295-298 (NKWD). In terms of domain architecture, KH-like spans 351–435 (DRFSTNYLTR…PIRIEFRTTD (85 aa)). Residues 442–466 (KKSMTRQQFIQKRRKEERDRNNPRR) form a disordered region. The segment covering 455–466 (RKEERDRNNPRR) has biased composition (basic and acidic residues).

The protein belongs to the TRAFAC class TrmE-Era-EngA-EngB-Septin-like GTPase superfamily. EngA (Der) GTPase family. Associates with the 50S ribosomal subunit.

Its function is as follows. GTPase that plays an essential role in the late steps of ribosome biogenesis. The protein is GTPase Der of Cellvibrio japonicus (strain Ueda107) (Pseudomonas fluorescens subsp. cellulosa).